The chain runs to 113 residues: Iron-sulfur cluster insertion protein ErpA (113 aa).

Iron-sulfur cluster is bound by residues C41, C105, and C107.

It belongs to the HesB/IscA family. Homodimer. The cofactor is iron-sulfur cluster.

In terms of biological role, required for insertion of 4Fe-4S clusters for at least IspG. This Vibrio vulnificus (strain CMCP6) protein is Iron-sulfur cluster insertion protein ErpA.